Reading from the N-terminus, the 102-residue chain is MNNVFEIINQARRKNKLKRELQDNQKKIRDNQKRVTLLENMLDYIHPTMTTAEVIAVVENMKADYEDRVDDHIIKSAEISKSRRDISRKIRELTEADKKANK.

Residues 7 to 34 (IINQARRKNKLKRELQDNQKKIRDNQKR) are a coiled coil.

This sequence belongs to the pole-localizer TmaR family.

The protein resides in the cytoplasm. Pole-localizer protein involved in the regulation of several cellular processes. The polypeptide is Pole-localizer protein TmaR (Aliivibrio fischeri (strain ATCC 700601 / ES114) (Vibrio fischeri)).